We begin with the raw amino-acid sequence, 305 residues long: Probable lipid kinase YegS-like (305 aa).

In terms of domain architecture, DAGKc spans 1–129; the sequence is MTQRRAMLIL…VDLGEVGGKL (129 aa). ATP-binding positions include threonine 39, 65-71, and threonine 92; that span reads GDGTLRD. 3 residues coordinate Mg(2+): leucine 210, aspartate 213, and leucine 215. Residue glutamate 268 is the Proton acceptor of the active site.

It belongs to the diacylglycerol/lipid kinase family. YegS lipid kinase subfamily. Requires Mg(2+) as cofactor. Ca(2+) is required as a cofactor.

It is found in the cytoplasm. Probably phosphorylates lipids; the in vivo substrate is unknown. The polypeptide is Probable lipid kinase YegS-like (Pseudomonas savastanoi pv. phaseolicola (strain 1448A / Race 6) (Pseudomonas syringae pv. phaseolicola (strain 1448A / Race 6))).